Here is a 273-residue protein sequence, read N- to C-terminus: Bidirectional sugar transporter SWEET1a (273 aa).

Topologically, residues 1–6 (MEHIAR) are extracellular. A helical transmembrane segment spans residues 7–27 (FFFGVSGNVIALFLFLSPVVT). The 89-residue stretch at 7-95 (FFFGVSGNVI…VIFLIFAERK (89 aa)) folds into the MtN3/slv 1 domain. Residues 28–42 (FWRIIKKRSTEDFSG) lie on the Cytoplasmic side of the membrane. A helical membrane pass occupies residues 43-63 (VPYNMTLLNCLLSAWYGLPFV). Over 64–71 (SPNNILVT) the chain is Extracellular. A helical transmembrane segment spans residues 72–92 (TINGTGSVIEAIYVVIFLIFA). Topologically, residues 93–101 (ERKARLKMM) are cytoplasmic. Residues 102–122 (GLLGLVTSIFTMVVLVSLLAL) form a helical membrane-spanning segment. Residues 123 to 128 (HGQGRK) lie on the Extracellular side of the membrane. Residues 129 to 149 (LFCGLAATIFSICMYASPLSI) form a helical membrane-spanning segment. Positions 131–214 (CGLAATIFSI…ILYAIYRNHK (84 aa)) constitute a MtN3/slv 2 domain. The Cytoplasmic portion of the chain corresponds to 150–163 (MRLVIKTKSVEFMP). Residues 164 to 184 (FLLSLSVFLCGTSWFIYGLLG) form a helical membrane-spanning segment. At 185-188 (RDPF) the chain is on the extracellular side. A helical transmembrane segment spans residues 189-209 (IAIPNGCGSFLGLMQLILYAI). Over 210 to 273 (YRNHKGATPA…SADDKVASQV (64 aa)) the chain is Cytoplasmic.

The protein belongs to the SWEET sugar transporter family. Forms homooligomers and/or heterooligomers.

The protein localises to the cell membrane. Its function is as follows. Mediates both low-affinity uptake and efflux of sugar across the plasma membrane. In Oryza sativa subsp. japonica (Rice), this protein is Bidirectional sugar transporter SWEET1a (SWEET1A).